Here is an 88-residue protein sequence, read N- to C-terminus: Putative defensin-like protein 228 (88 aa).

Positions 1-27 are cleaved as a signal peptide; it reads MMKSAILLMVSCVFMFLVVSYIQDVEG. 4 cysteine pairs are disulfide-bonded: cysteine 32–cysteine 88, cysteine 42–cysteine 66, cysteine 50–cysteine 82, and cysteine 64–cysteine 84.

Belongs to the DEFL family.

Its subcellular location is the secreted. In Arabidopsis thaliana (Mouse-ear cress), this protein is Putative defensin-like protein 228 (SCRL3).